Reading from the N-terminus, the 270-residue chain is NAD kinase (270 aa).

Catalysis depends on D63, which acts as the Proton acceptor. NAD(+) contacts are provided by residues 63 to 64, R68, 131 to 132, K142, R159, D161, 172 to 177, A196, and Q230; these read DG, NE, and TAYAMS.

It belongs to the NAD kinase family. Requires a divalent metal cation as cofactor.

It is found in the cytoplasm. The catalysed reaction is NAD(+) + ATP = ADP + NADP(+) + H(+). In terms of biological role, involved in the regulation of the intracellular balance of NAD and NADP, and is a key enzyme in the biosynthesis of NADP. Catalyzes specifically the phosphorylation on 2'-hydroxyl of the adenosine moiety of NAD to yield NADP. The sequence is that of NAD kinase from Methanoregula boonei (strain DSM 21154 / JCM 14090 / 6A8).